The following is a 347-amino-acid chain: MRGFILALVLALVGAQKHDLEPVFSTGKTYLYDYKGLILHGLPGKGLAAAGLKLTCRLEISRVSRSDHLLQIENVFKVANKTRHHKKWIHSRVKAAVTDLWEEPSATPLSSSSSTDSSAEGEEPGNKRDKDEIWQFGKKYGADSSSSSSSSSTGSGSSKTCSSSREDSSRDKHCSVDSEYFNQQADLPIYQFWFKPADEQDPRRKVQNSSISSSSSSSSDEGISTPVSQPMFLGDSKPPVLAAVLRAIRRNEQPTGYQLVLYTDRQASRLRVQVFVSSITESDRWKLCADASVVNSHKASGTLKWGKDCQDYQVATQIATGQFAAHPAIQVKLEWSEVPSSVRKTAR.

An N-terminal signal peptide occupies residues 1-15 (MRGFILALVLALVGA). N80 carries an N-linked (GlcNAc...) asparagine glycan. Positions 104 to 118 (PSATPLSSSSSTDSS) are enriched in low complexity. 2 disordered regions span residues 104-174 (PSAT…DKHC) and 200-234 (QDPR…MFLG). The span at 124 to 133 (PGNKRDKDEI) shows a compositional bias: basic and acidic residues. Low complexity predominate over residues 144-163 (SSSSSSSSSTGSGSSKTCSS). The segment covering 164-174 (SREDSSRDKHC) has biased composition (basic and acidic residues). The N-linked (GlcNAc...) asparagine glycan is linked to N208. Residues 209–219 (SSISSSSSSSS) show a composition bias toward low complexity.

In terms of processing, phosvitin, an egg yolk storage protein, is one of the most highly phosphorylated (10%) proteins in nature. Post-translationally, cathepsin D is responsible for intraoocytic processing of vitellogenin. May contain intrachain disulfide bonds. In terms of tissue distribution, produced by the liver, secreted into the blood and then sequestered by receptor mediated endocytosis into growing oocytes, where it is generally cleaved, giving rise to the respective yolk components.

Its function is as follows. Precursor of the egg-yolk proteins that are sources of nutrients during early development of oviparous organisms. Functionally, phosvitin is believed to be of importance in sequestering calcium, iron and other cations for the developing embryo. This chain is Vitellogenin-3 (VTG3), found in Gallus gallus (Chicken).